The primary structure comprises 100 residues: Urease subunit gamma (100 aa).

The protein belongs to the urease gamma subunit family. Heterotrimer of UreA (gamma), UreB (beta) and UreC (alpha) subunits. Three heterotrimers associate to form the active enzyme.

The protein localises to the cytoplasm. It carries out the reaction urea + 2 H2O + H(+) = hydrogencarbonate + 2 NH4(+). It participates in nitrogen metabolism; urea degradation; CO(2) and NH(3) from urea (urease route): step 1/1. The protein is Urease subunit gamma of Streptomyces coelicolor (strain ATCC BAA-471 / A3(2) / M145).